The primary structure comprises 775 residues: Polyribonucleotide nucleotidyltransferase (775 aa).

A disordered region spans residues 223 to 247; sequence DEQVPEKPRKGRRRGRKSSPRKKTD. Positions 231–243 are enriched in basic residues; it reads RKGRRRGRKSSPR. Asp-567 and Asp-573 together coordinate Mg(2+). In terms of domain architecture, KH spans 633–692; the sequence is PRITTISVPVSKIGEVIGPKGKNINQITEDTGARVSIEDDGTVFISATSGGSAEAAVDRI. Positions 704 to 773 constitute an S1 motif domain; the sequence is GERFLGTVVK…NRGKISLVPV (70 aa).

This sequence belongs to the polyribonucleotide nucleotidyltransferase family. It depends on Mg(2+) as a cofactor.

The protein resides in the cytoplasm. It carries out the reaction RNA(n+1) + phosphate = RNA(n) + a ribonucleoside 5'-diphosphate. Involved in mRNA degradation. Catalyzes the phosphorolysis of single-stranded polyribonucleotides processively in the 3'- to 5'-direction. This is Polyribonucleotide nucleotidyltransferase from Corynebacterium kroppenstedtii (strain DSM 44385 / JCM 11950 / CIP 105744 / CCUG 35717).